The chain runs to 161 residues: DNA endonuclease I-CvuI (161 aa).

The protein belongs to the LAGLIDADG endonuclease family.

The protein localises to the plastid. The protein resides in the chloroplast. Functionally, probable endonuclease involved in intron homing. The protein is DNA endonuclease I-CvuI of Chlorella vulgaris (Green alga).